A 447-amino-acid chain; its full sequence is GTPase Der (447 aa).

EngA-type G domains follow at residues 3–167 and 181–354; these read PVIA…FAER and TRIA…AAAM. Residues 9 to 16, 56 to 60, 119 to 122, 187 to 194, 234 to 238, and 299 to 302 contribute to the GTP site; these read GRPNVGKS, DTGGF, NKAE, DTAGL, and NKWD. The 85-residue stretch at 355-439 folds into the KH-like domain; sequence VKLPTPKLTR…PLRIEFRTNK (85 aa).

The protein belongs to the TRAFAC class TrmE-Era-EngA-EngB-Septin-like GTPase superfamily. EngA (Der) GTPase family. Associates with the 50S ribosomal subunit.

Functionally, GTPase that plays an essential role in the late steps of ribosome biogenesis. This Ralstonia pickettii (strain 12J) protein is GTPase Der.